A 323-amino-acid chain; its full sequence is Acetyl esterase (323 aa).

The Involved in the stabilization of the negatively charged intermediate by the formation of the oxyanion hole motif lies at 91-93; that stretch reads HGG. Active-site residues include serine 165, aspartate 262, and histidine 292.

This sequence belongs to the 'GDXG' lipolytic enzyme family. Homodimer. Interacts with MalT and MelA.

It localises to the cytoplasm. Functionally, displays esterase activity towards short chain fatty esters (acyl chain length of up to 8 carbons). Able to hydrolyze triacetylglycerol (triacetin) and tributyrylglycerol (tributyrin), but not trioleylglycerol (triolein) or cholesterol oleate. Negatively regulates MalT activity by antagonizing maltotriose binding. Inhibits MelA galactosidase activity. This Salmonella schwarzengrund (strain CVM19633) protein is Acetyl esterase.